The primary structure comprises 397 residues: MTEFDVTDGVHDVIEDTELPRRLKDEVLATAEERGVTKSQANEIATAVEAQYLDTRVDPLDPVGTVSAQSIGEPGTQMTMNTFHYAGVAEMDVTQGLPRLIELVDARKTPDTPVMEVYLEDEYAEERERAHEVVWKIEATKILALGDISTNVADMVVRIDLNEDTLQERWPRVDSTTQIAGEVAETIEGNLGVTVTQDGTILEFGPSEPSYRELLQLVEQLRDIVFKGIEEVSRVVIRREETERGEEFVLYTEGSAFKKALKIEGVDATRTSCNNIHEVHKTLGIEAAREAIINETMTTLEEQGLDDVNIRHLMLVADIMTNDGTIESIGRHGISGNKNSVLARAAFEVTVNHLLDAAIHGESDDLDGVIENVIVGKPVRLGTGDVDLRMGATQTSD.

The protein belongs to the RNA polymerase beta' chain family. In terms of assembly, part of the RNA polymerase complex.

It localises to the cytoplasm. It catalyses the reaction RNA(n) + a ribonucleoside 5'-triphosphate = RNA(n+1) + diphosphate. In terms of biological role, DNA-dependent RNA polymerase (RNAP) catalyzes the transcription of DNA into RNA using the four ribonucleoside triphosphates as substrates. Forms part of the jaw domain. The protein is DNA-directed RNA polymerase subunit Rpo1C of Halobacterium salinarum (strain ATCC 29341 / DSM 671 / R1).